Reading from the N-terminus, the 664-residue chain is DNA ligase (664 aa).

Residues 32–36 (DKEYD) and 80–81 (SL) contribute to the NAD(+) site. The N6-AMP-lysine intermediate role is filled by Lys-122. Residues Arg-144, Glu-178, and Lys-314 each coordinate NAD(+). 4 residues coordinate Zn(2+): Cys-407, Cys-410, Cys-423, and Cys-429. The 78-residue stretch at 587–664 (IDENPFMDKT…NEEEFSNKIK (78 aa)) folds into the BRCT domain.

This sequence belongs to the NAD-dependent DNA ligase family. LigA subfamily. Mg(2+) is required as a cofactor. It depends on Mn(2+) as a cofactor.

It catalyses the reaction NAD(+) + (deoxyribonucleotide)n-3'-hydroxyl + 5'-phospho-(deoxyribonucleotide)m = (deoxyribonucleotide)n+m + AMP + beta-nicotinamide D-nucleotide.. In terms of biological role, DNA ligase that catalyzes the formation of phosphodiester linkages between 5'-phosphoryl and 3'-hydroxyl groups in double-stranded DNA using NAD as a coenzyme and as the energy source for the reaction. It is essential for DNA replication and repair of damaged DNA. This is DNA ligase from Clostridium botulinum (strain Loch Maree / Type A3).